Consider the following 228-residue polypeptide: Early nodulin-like protein 18 (228 aa).

An N-terminal signal peptide occupies residues 1 to 26 (MSPSCSSCVNVLLIMCLMLLSLSADA). The Phytocyanin domain occupies 28-148 (KNYTVGESTG…GQHFMINVTH (121 aa)). Asparagine 29, asparagine 71, asparagine 94, and asparagine 145 each carry an N-linked (GlcNAc...) asparagine glycan. A disulfide bridge links cysteine 86 with cysteine 136. A disordered region spans residues 148–211 (HGQGLPDSSS…VHSKKSSSST (64 aa)). The span at 153-170 (PDSSSPDDAAAPGPSESS) shows a compositional bias: low complexity. Over residues 188–204 (DHPKDIESADDDKEVHS) the composition is skewed to basic and acidic residues. Residue serine 204 is the site of GPI-anchor amidated serine attachment. Residues 205-228 (KKSSSSTTKTSLFCFVFMGLFASF) constitute a propeptide, removed in mature form.

This sequence belongs to the early nodulin-like (ENODL) family. In terms of tissue distribution, mostly expressed in seedlings, roots and flowers, and, to a lower extent, in leaves, stems and seeds.

The protein resides in the cell membrane. In terms of biological role, may act as a carbohydrate transporter. The chain is Early nodulin-like protein 18 from Arabidopsis thaliana (Mouse-ear cress).